The sequence spans 192 residues: Adenylate kinase (192 aa).

10–18 (GVPGVGGTT) lines the ATP pocket.

Belongs to the archaeal adenylate kinase family. Monomer.

It is found in the cytoplasm. It catalyses the reaction AMP + ATP = 2 ADP. In Methanotorris igneus (Methanococcus igneus), this protein is Adenylate kinase (adkA).